Reading from the N-terminus, the 381-residue chain is Translation initiation factor eIF2B subunit beta (381 aa).

Residues 125–148 (LQKPEQPHQNRKNSSGSSSMKTKT) are disordered. Residues 136–145 (KNSSGSSSMK) are compositionally biased toward polar residues.

It belongs to the eIF-2B alpha/beta/delta subunits family. As to quaternary structure, component of the translation initiation factor 2B (eIF2B) complex which is a heterodecamer of two sets of five different subunits: alpha, beta, gamma, delta and epsilon. Subunits alpha, beta and delta comprise a regulatory subcomplex and subunits epsilon and gamma comprise a catalytic subcomplex. Within the complex, the hexameric regulatory complex resides at the center, with the two heterodimeric catalytic subcomplexes bound on opposite sides.

The protein localises to the cytoplasm. Its subcellular location is the cytosol. Functionally, acts as a component of the translation initiation factor 2B (eIF2B) complex, which catalyzes the exchange of GDP for GTP on the eukaryotic initiation factor 2 (eIF2) complex gamma subunit. Its guanine nucleotide exchange factor activity is repressed when bound to eIF2 complex phosphorylated on the alpha subunit, thereby limiting the amount of methionyl-initiator methionine tRNA available to the ribosome and consequently global translation is repressed. It activates the synthesis of GCN4 in yeast under amino acid starvation conditions by suppressing the inhibitory effects of multiple AUG codons present in the leader of GCN4 mRNA. It may promote either repression or activation of GCN4 expression depending on amino acid availability. GCD6 and GCD7 repress GCN4 expression at the translational level by ensuring that ribosomes which have translated UORF1 will reinitiate at UORF2, -3, or -4 and thus fail to reach the GCN4 start site. In Saccharomyces cerevisiae (strain ATCC 204508 / S288c) (Baker's yeast), this protein is Translation initiation factor eIF2B subunit beta (GCD7).